Here is a 316-residue protein sequence, read N- to C-terminus: UDP-N-acetyl-2-amino-2-deoxy-D-glucuronate oxidase (316 aa).

Residues glycine 11–isoleucine 13, tyrosine 32–serine 37, glutamate 55, asparagine 81–histidine 84, glutamate 101–lysine 102, glutamine 130, and tryptophan 171–lysine 172 each bind NAD(+).

Belongs to the Gfo/Idh/MocA family. Homotetramer.

The catalysed reaction is UDP-2-acetamido-2-deoxy-alpha-D-glucuronate + NAD(+) = UDP-2-acetamido-2-deoxy-alpha-D-ribo-hex-3-uluronate + NADH + H(+). It catalyses the reaction 2-hydroxyglutarate + NAD(+) = 2-oxoglutarate + NADH + H(+). It functions in the pathway bacterial outer membrane biogenesis; LPS O-antigen biosynthesis. Plays a role in the biosynthesis of B-band O antigen for serotype O5. Catalyzes the NAD-dependent oxidation of UDP-N-acetylglucosaminuronic acid (UDP-D-GlcNAcA) to UDP-2-acetamido-2-deoxy-3-oxo-D-glucuronic acid (UDP-3-oxo-D-GlcNAcA). Cannot use UDP-GlcNAc or UDP-GalNAc as the nucleotide sugar substrate, and can use only poorly UDP-D-glucuronic acid (UDP-GlcA). Undergoes an NAD(+) recycling mechanism using 2-oxoglutarate as an oxidant. This chain is UDP-N-acetyl-2-amino-2-deoxy-D-glucuronate oxidase, found in Pseudomonas aeruginosa (strain ATCC 15692 / DSM 22644 / CIP 104116 / JCM 14847 / LMG 12228 / 1C / PRS 101 / PAO1).